The primary structure comprises 1057 residues: DNA-directed RNA polymerase subunit beta' (1057 aa).

The Zn(2+) site is built by Cys-60, Cys-62, Cys-75, and Cys-78. Mg(2+) is bound by residues Asp-449, Asp-451, and Asp-453. Residues Cys-822, Cys-896, Cys-903, and Cys-906 each contribute to the Zn(2+) site.

It belongs to the RNA polymerase beta' chain family. In terms of assembly, the RNAP catalytic core consists of 2 alpha, 1 beta, 1 beta' and 1 omega subunit. When a sigma factor is associated with the core the holoenzyme is formed, which can initiate transcription. Mg(2+) is required as a cofactor. Zn(2+) serves as cofactor.

It carries out the reaction RNA(n) + a ribonucleoside 5'-triphosphate = RNA(n+1) + diphosphate. Functionally, DNA-dependent RNA polymerase catalyzes the transcription of DNA into RNA using the four ribonucleoside triphosphates as substrates. The protein is DNA-directed RNA polymerase subunit beta' of Staphylococcus aureus.